The following is an 89-amino-acid chain: ATP synthase subunit c, sodium ion specific (89 aa).

A run of 2 helical transmembrane segments spans residues 9–29 (VVLA…IGPG) and 68–88 (GIYS…VGLL).

The protein belongs to the ATPase C chain family. F-type ATPases have 2 components, F(1) - the catalytic core - and F(0) - the membrane sodium channel. F(1) has five subunits: alpha(3), beta(3), gamma(1), delta(1), epsilon(1). F(0) has three main subunits: a(1), b(2) and c(10-14). The alpha and beta chains form an alternating ring which encloses part of the gamma chain. F(1) is attached to F(0) by a central stalk formed by the gamma and epsilon chains, while a peripheral stalk is formed by the delta and b chains.

Its subcellular location is the cell membrane. Its function is as follows. F(1)F(0) ATP synthase produces ATP from ADP in the presence of a proton or sodium gradient. F-type ATPases consist of two structural domains, F(1) containing the extramembraneous catalytic core and F(0) containing the membrane sodium channel, linked together by a central stalk and a peripheral stalk. During catalysis, ATP synthesis in the catalytic domain of F(1) is coupled via a rotary mechanism of the central stalk subunits to sodium translocation. Key component of the F(0) channel; it plays a direct role in translocation across the membrane. A homomeric c-ring of between 10-14 subunits forms the central stalk rotor element with the F(1) delta and epsilon subunits. This Propionigenium modestum protein is ATP synthase subunit c, sodium ion specific (atpE).